The following is a 149-amino-acid chain: Large ribosomal subunit protein uL22c (149 aa).

The protein belongs to the universal ribosomal protein uL22 family. As to quaternary structure, part of the 50S ribosomal subunit.

It localises to the plastid. It is found in the chloroplast. In terms of biological role, this protein binds specifically to 23S rRNA. The globular domain of the protein is located near the polypeptide exit tunnel on the outside of the subunit, while an extended beta-hairpin is found that lines the wall of the exit tunnel in the center of the 70S ribosome. This is Large ribosomal subunit protein uL22c (rpl22) from Brachypodium distachyon (Purple false brome).